Here is a 255-residue protein sequence, read N- to C-terminus: ParA family protein CPn_0805/CP_1066/CPj0805/CpB0834 (255 aa).

Belongs to the ParA family.

The protein is ParA family protein CPn_0805/CP_1066/CPj0805/CpB0834 of Chlamydia pneumoniae (Chlamydophila pneumoniae).